The sequence spans 376 residues: Succinyl-diaminopimelate desuccinylase (376 aa).

His-66 contributes to the Zn(2+) binding site. Asp-68 is a catalytic residue. Asp-99 lines the Zn(2+) pocket. Glu-133 (proton acceptor) is an active-site residue. The Zn(2+) site is built by Glu-134, Glu-162, and His-348.

This sequence belongs to the peptidase M20A family. DapE subfamily. Homodimer. Zn(2+) is required as a cofactor. Requires Co(2+) as cofactor.

The catalysed reaction is N-succinyl-(2S,6S)-2,6-diaminopimelate + H2O = (2S,6S)-2,6-diaminopimelate + succinate. The protein operates within amino-acid biosynthesis; L-lysine biosynthesis via DAP pathway; LL-2,6-diaminopimelate from (S)-tetrahydrodipicolinate (succinylase route): step 3/3. In terms of biological role, catalyzes the hydrolysis of N-succinyl-L,L-diaminopimelic acid (SDAP), forming succinate and LL-2,6-diaminopimelate (DAP), an intermediate involved in the bacterial biosynthesis of lysine and meso-diaminopimelic acid, an essential component of bacterial cell walls. The polypeptide is Succinyl-diaminopimelate desuccinylase (Thioalkalivibrio sulfidiphilus (strain HL-EbGR7)).